We begin with the raw amino-acid sequence, 433 residues long: Dihydrolipoyllysine-residue acetyltransferase component of pyruvate dehydrogenase complex (433 aa).

A Lipoyl-binding domain is found at 2–77 (AFEFRLPDIG…VVGDVIVKID (76 aa)). Lys-43 carries the N6-lipoyllysine modification. Disordered regions lie at residues 80–134 (DAEE…PSVR) and 164–204 (YLNG…FPET). 2 stretches are compositionally biased toward basic and acidic residues: residues 84–103 (MQFK…KEQE) and 117–126 (EKTEVDESKT). A Peripheral subunit-binding (PSBD) domain is found at 128–165 (KAMPSVRKYARENGVNIKAVNGSGKNGRITKEDIDAYL). A compositionally biased stretch (low complexity) spans 166-185 (NGGSSEEGSNTSAASESTSS). His-404 is an active-site residue.

Belongs to the 2-oxoacid dehydrogenase family. As to quaternary structure, forms a 24-polypeptide structural core with octahedral symmetry. (R)-lipoate is required as a cofactor.

It carries out the reaction N(6)-[(R)-dihydrolipoyl]-L-lysyl-[protein] + acetyl-CoA = N(6)-[(R)-S(8)-acetyldihydrolipoyl]-L-lysyl-[protein] + CoA. Its function is as follows. The pyruvate dehydrogenase complex catalyzes the overall conversion of pyruvate to acetyl-CoA and CO(2). It contains multiple copies of three enzymatic components: pyruvate dehydrogenase (E1), dihydrolipoamide acetyltransferase (E2) and lipoamide dehydrogenase (E3). This chain is Dihydrolipoyllysine-residue acetyltransferase component of pyruvate dehydrogenase complex (pdhC), found in Staphylococcus epidermidis (strain ATCC 35984 / DSM 28319 / BCRC 17069 / CCUG 31568 / BM 3577 / RP62A).